A 493-amino-acid chain; its full sequence is MTTVRTRIAPSPTGDPHVGTAYIALFNYCFAKQHGGEFILRIEDTDQLRSTRESEQQIFDALRWMGIEWSEGPDVGGPHGPYRQSERGDIYQKYAQQLVELGHAFPCFCTAEELDEMRAEQQAKGETPRYDGRALLLSKEEVQRRLDAGEPHVIRMKVPTEGVCVVPDMLRGEVEIPWDRMDMQVLMKTDGLPTYFLANVVDDHLMGITHVLRGEEWLPSAPKLILLYEYFGWDKPQLCYMPLLRNPDKSKLSKRKNPTSVTFYERMGFMPEAMLNYLGRMGWSMPDEREKFSLQEMVDNFDLSRVSLGGPIFDIEKLSWLNGQWLRDLPVEEFASRLKTWALNPDYMMKIAPHVQGRVETFSQVAPLAGFFFAGGVTPDVKLFEHKKLSPEQVRQVMQLILWKLESLRQWEKDRIMGCIQAVVEHLKLKLRDAMPLMFAAITGQANSVSVTDAMEILGPDLTRFRLRQALDLLGGVSKKENKEWEKLLGSIA.

Positions 10–20 (PSPTGDPHVGT) match the 'HIGH' region motif. Residues 251–255 (KLSKR) carry the 'KMSKS' region motif. Lys254 provides a ligand contact to ATP.

The protein belongs to the class-I aminoacyl-tRNA synthetase family. Glutamate--tRNA ligase type 1 subfamily. In terms of assembly, monomer.

The protein resides in the cytoplasm. It carries out the reaction tRNA(Glu) + L-glutamate + ATP = L-glutamyl-tRNA(Glu) + AMP + diphosphate. In terms of biological role, catalyzes the attachment of glutamate to tRNA(Glu) in a two-step reaction: glutamate is first activated by ATP to form Glu-AMP and then transferred to the acceptor end of tRNA(Glu). In Pseudomonas savastanoi pv. phaseolicola (strain 1448A / Race 6) (Pseudomonas syringae pv. phaseolicola (strain 1448A / Race 6)), this protein is Glutamate--tRNA ligase.